We begin with the raw amino-acid sequence, 173 residues long: Putative 2-oxo-4-hydroxy-4-carboxy-5-ureidoimidazoline decarboxylase (173 aa).

The active-site Proton donor is histidine 67. Substrate is bound by residues proline 68, 84-88 (SQREQ), and 119-123 (FVLAA). A Microbody targeting signal motif is present at residues 171-173 (AKL).

This sequence belongs to the OHCU decarboxylase family. In terms of tissue distribution, apparently not expressed.

The protein localises to the peroxisome. It catalyses the reaction 5-hydroxy-2-oxo-4-ureido-2,5-dihydro-1H-imidazole-5-carboxylate + H(+) = (S)-allantoin + CO2. It functions in the pathway purine metabolism; urate degradation; (S)-allantoin from urate: step 3/3. Functionally, catalyzes the stereoselective decarboxylation of 2-oxo-4-hydroxy-4-carboxy-5-ureidoimidazoline (OHCU) to (S)-allantoin. The polypeptide is Putative 2-oxo-4-hydroxy-4-carboxy-5-ureidoimidazoline decarboxylase (URAD) (Homo sapiens (Human)).